The chain runs to 149 residues: SsrA-binding protein (149 aa).

This sequence belongs to the SmpB family.

It is found in the cytoplasm. Required for rescue of stalled ribosomes mediated by trans-translation. Binds to transfer-messenger RNA (tmRNA), required for stable association of tmRNA with ribosomes. tmRNA and SmpB together mimic tRNA shape, replacing the anticodon stem-loop with SmpB. tmRNA is encoded by the ssrA gene; the 2 termini fold to resemble tRNA(Ala) and it encodes a 'tag peptide', a short internal open reading frame. During trans-translation Ala-aminoacylated tmRNA acts like a tRNA, entering the A-site of stalled ribosomes, displacing the stalled mRNA. The ribosome then switches to translate the ORF on the tmRNA; the nascent peptide is terminated with the 'tag peptide' encoded by the tmRNA and targeted for degradation. The ribosome is freed to recommence translation, which seems to be the essential function of trans-translation. This Wolbachia pipientis wMel protein is SsrA-binding protein.